The chain runs to 402 residues: Advanced glycosylation end product-specific receptor (402 aa).

Residues 1 to 22 (MPTGTVARAWVLVLALWGAVAG) form the signal peptide. Residues 23-109 (GQNITARIGE…ATNRLGKEVK (87 aa)) enclose the Ig-like V-type domain. Over 23–341 (GQNITARIGE…DGSGLGTLAL (319 aa)) the chain is Extracellular. 2 N-linked (GlcNAc...) asparagine glycosylation sites follow: asparagine 25 and asparagine 80. 2 disulfides stabilise this stretch: cysteine 38–cysteine 98 and cysteine 143–cysteine 206. 2 Ig-like C2-type domains span residues 123-219 (PEIV…RPLN) and 233-315 (PEGI…PPVN). Residues 342–362 (ALGILGGLGIAALLIGAILWR) form a helical membrane-spanning segment. At 363-402 (KRQPRLEERKAPESQEDEEERAELNQSEEAEMPENGAGGP) the chain is on the cytoplasmic side. Residues 368-402 (LEERKAPESQEDEEERAELNQSEEAEMPENGAGGP) form a disordered region. A phosphoserine mark is found at serine 376 and serine 389. A compositionally biased stretch (acidic residues) spans 376-394 (SQEDEEERAELNQSEEAEM).

In terms of assembly, constitutive homodimer; disulfide-linked. Forms homooligomers. Interacts with S100A1 and APP. Interacts with S100B, S100A12 and S100A14. Interacts with TIRAP. Interacts with HMGB1. Interacts with LGP2; this interaction plays an important role in AGER-mediated pro-inflammatory responses and cytokine release. Interacts with double-strand break repair protein MRE11 which is a core component of the MRN complex; the interaction enhances MRE11 endonuclease activity and promotes DNA repair. Interacts with the MCM2-7 complex via interaction with complex member MCM2; the interaction is increased following DNA replication stress and stabilizes the MCM2-7 complex at replication forks. Phosphorylated on its cytoplasmic domain by PKCzeta/PRKCZ upon ligand binding. Phosphorylated by ATM following DNA damage. In terms of processing, targeted by the ubiquitin E3 ligase subunit FBXO10 to mediate its ubiquitination and degradation. Endothelial cells and cardiomyocytes. Expressed in brain.

The protein resides in the cell membrane. It is found in the cell projection. Its subcellular location is the phagocytic cup. It localises to the early endosome. The protein localises to the nucleus. Functionally, cell surface pattern recognition receptor that senses endogenous stress signals with a broad ligand repertoire including advanced glycation end products, S100 proteins, high-mobility group box 1 protein/HMGB1, amyloid beta/APP oligomers, nucleic acids, histones, phospholipids and glycosaminoglycans. Advanced glycosylation end products are nonenzymatically glycosylated proteins which accumulate in vascular tissue in aging and at an accelerated rate in diabetes. These ligands accumulate at inflammatory sites during the pathogenesis of various diseases including diabetes, vascular complications, neurodegenerative disorders and cancers, and RAGE transduces their binding into pro-inflammatory responses. Upon ligand binding, uses TIRAP and MYD88 as adapters to transduce the signal ultimately leading to the induction of inflammatory cytokines IL6, IL8 and TNFalpha through activation of NF-kappa-B. Interaction with S100A12 on endothelium, mononuclear phagocytes, and lymphocytes triggers cellular activation, with generation of key pro-inflammatory mediators. Interaction with S100B after myocardial infarction may play a role in myocyte apoptosis by activating ERK1/2 and p53/TP53 signaling. Contributes to the translocation of amyloid-beta peptide (ABPP) across the cell membrane from the extracellular to the intracellular space in cortical neurons. ABPP-initiated RAGE signaling, especially stimulation of p38 mitogen-activated protein kinase (MAPK), has the capacity to drive a transport system delivering ABPP as a complex with RAGE to the intraneuronal space. Participates in endothelial albumin transcytosis together with HMGB1 through the RAGE/SRC/Caveolin-1 pathway, leading to endothelial hyperpermeability. Mediates the loading of HMGB1 in extracellular vesicles (EVs) that shuttle HMGB1 to hepatocytes by transferrin-mediated endocytosis and subsequently promote hepatocyte pyroptosis by activating the NLRP3 inflammasome. Binds to DNA and promotes extracellular hypomethylated DNA (CpG DNA) uptake by cells via the endosomal route to activate inflammatory responses. Mediates phagocytosis by non-professional phagocytes (NPP) and this is enhanced by binding to ligands including RNA, DNA, HMGB1 and histones. Promotes NPP-mediated phagocytosis of Saccharomyces cerevisiae spores by binding to RNA attached to the spore wall. Also promotes NPP-mediated phagocytosis of apoptotic cells. Following DNA damage, recruited to DNA double-strand break sites where it colocalizes with the MRN repair complex via interaction with double-strand break repair protein MRE11. Enhances the endonuclease activity of MRE11, promoting the end resection of damaged DNA. Promotes DNA damage repair in trophoblasts which enhances trophoblast invasion and contributes to placental development and maintenance. Protects cells from DNA replication stress by localizing to damaged replication forks where it stabilizes the MCM2-7 complex and promotes faithful progression of the replication fork. The polypeptide is Advanced glycosylation end product-specific receptor (Ager) (Rattus norvegicus (Rat)).